The sequence spans 148 residues: Deoxyuridine 5'-triphosphate nucleotidohydrolase (148 aa).

Residues 68–70, Asn81, 85–87, and Lys95 contribute to the substrate site; these read RSG and TVD.

This sequence belongs to the dUTPase family. The cofactor is Mg(2+).

The enzyme catalyses dUTP + H2O = dUMP + diphosphate + H(+). The protein operates within pyrimidine metabolism; dUMP biosynthesis; dUMP from dCTP (dUTP route): step 2/2. Functionally, this enzyme is involved in nucleotide metabolism: it produces dUMP, the immediate precursor of thymidine nucleotides and it decreases the intracellular concentration of dUTP so that uracil cannot be incorporated into DNA. In Caldanaerobacter subterraneus subsp. tengcongensis (strain DSM 15242 / JCM 11007 / NBRC 100824 / MB4) (Thermoanaerobacter tengcongensis), this protein is Deoxyuridine 5'-triphosphate nucleotidohydrolase.